Here is a 123-residue protein sequence, read N- to C-terminus: Sperm-associated antigen 11A (123 aa).

A signal peptide spans 1–25 (MRQRLLPSVTSLLLVALLFPGSSQA). The N-linked (GlcNAc...) asparagine glycan is linked to N29.

The protein belongs to the SPAG11 family.

The protein resides in the secreted. Functionally, has antimicrobial activity against E.coli. Plays a role in the defense response in the male reproductive tract, contributing to sperm maturation, storage and protection. This chain is Sperm-associated antigen 11A, found in Homo sapiens (Human).